Here is a 331-residue protein sequence, read N- to C-terminus: Fe-S cluster assembly protein DRE2 (331 aa).

The N-terminal SAM-like domain stretch occupies residues 1 to 146 (MSEILLLLHP…MPTFKKPVSS (146 aa)). The interval 142-164 (KPVSSPVTLTDTSANNTDAEDDL) is disordered. The segment covering 146 to 158 (SPVTLTDTSANNT) has biased composition (polar residues). The tract at residues 147-202 (PVTLTDTSANNTDAEDDLSMKRKLDSTKLAYFSDDSSGEEDDLIDENELIADSHKF) is linker. The [2Fe-2S] cluster site is built by Cys-212, Cys-224, Cys-227, and Cys-229. The fe-S binding site A stretch occupies residues 212 to 229 (CELPNGKKRKKACKDCTC). The [4Fe-4S] cluster site is built by Cys-294, Cys-297, Cys-305, and Cys-308. 2 short sequence motifs (cx2C motif) span residues 294–297 (CSSC) and 305–308 (CDGC). A fe-S binding site B region spans residues 294–308 (CSSCALGDAFRCDGC).

Belongs to the anamorsin family. Monomer. Interacts with TAH18. Interacts with MIA40. It depends on [2Fe-2S] cluster as a cofactor. Requires [4Fe-4S] cluster as cofactor.

It is found in the cytoplasm. The protein localises to the mitochondrion intermembrane space. Functionally, component of the cytosolic iron-sulfur (Fe-S) protein assembly (CIA) machinery required for the maturation of extramitochondrial Fe-S proteins. Part of an electron transfer chain functioning in an early step of cytosolic Fe-S biogenesis, facilitating the de novo assembly of a [4Fe-4S] cluster on the scaffold complex CFD1-NBP35. Electrons are transferred to DRE2 from NADPH via the FAD- and FMN-containing protein TAH18. TAH18-DRE2 are also required for the assembly of the diferric tyrosyl radical cofactor of ribonucleotide reductase (RNR), probably by providing electrons for reduction during radical cofactor maturation in the catalytic small subunit RNR2. The polypeptide is Fe-S cluster assembly protein DRE2 (Clavispora lusitaniae (strain ATCC 42720) (Yeast)).